Here is a 523-residue protein sequence, read N- to C-terminus: Butyrophilin subfamily 2 member A2 (523 aa).

Residues methionine 1–alanine 32 form the signal peptide. The Extracellular segment spans residues glutamine 33 to methionine 265. Residues phenylalanine 34–valine 145 form the Ig-like V-type domain. Residues asparagine 50, asparagine 118, asparagine 220, and asparagine 226 are each glycosylated (N-linked (GlcNAc...) asparagine). Cysteines 55 and 129 form a disulfide. An Ig-like C2-type domain is found at proline 153–lysine 234. The chain crosses the membrane as a helical span at residues valine 266 to isoleucine 286. Residues isoleucine 286–arginine 321 are a coiled coil. At lysine 287–leucine 523 the chain is on the cytoplasmic side. In terms of domain architecture, B30.2/SPRY spans isoleucine 309 to alanine 502.

Belongs to the immunoglobulin superfamily. BTN/MOG family. In terms of processing, N-glycosylated. Highly expressed in brain, bone marrow, small intestine, muscle, spleen and pancreas. Moderate expression was seen in lung, liver and kidney.

The protein resides in the membrane. In terms of biological role, inhibits the proliferation of CD4 and CD8 T-cells activated by anti-CD3 antibodies, T-cell metabolism and IL2 and IFNG secretion. This chain is Butyrophilin subfamily 2 member A2 (BTN2A2), found in Homo sapiens (Human).